We begin with the raw amino-acid sequence, 113 residues long: Ig kappa chain V-II region 7S34.1 (113 aa).

The interval 1–23 (DIVMTQTAPSALVTPGESVSISC) is framework-1. Cys23 and Cys93 are disulfide-bonded. The complementarity-determining-1 stretch occupies residues 24-39 (RSSKSLLHSNGNTYLY). A framework-2 region spans residues 40 to 54 (WFLQRPGQCPQLLIY). The complementarity-determining-2 stretch occupies residues 55 to 61 (RMSNLAS). Residues 62–93 (GVPDRFSGSGSGTAFTLRISRVEAEDVGVYYC) are framework-3. The segment at 94 to 102 (MQQREYPYT) is complementarity-determining-3. The tract at residues 103–112 (FGGGTKLEIK) is framework-4.

The polypeptide is Ig kappa chain V-II region 7S34.1 (Mus musculus (Mouse)).